A 249-amino-acid polypeptide reads, in one-letter code: Small ribosomal subunit protein eS6 (249 aa).

Residue lysine 14 forms a Glycyl lysine isopeptide (Lys-Gly) (interchain with G-Cter in SUMO2) linkage. Glutamate 35 carries the ADP-ribosyl glutamic acid modification. At arginine 137 the chain carries (3R)-3-hydroxyarginine. A Phosphoserine modification is found at serine 148. Lysine 211 carries the N6-acetyllysine modification. Basic and acidic residues predominate over residues 217–229; the sequence is MKEAKEKRQEQIA. Positions 217–249 are disordered; the sequence is MKEAKEKRQEQIAKRRRLSSLRASTSKSESSQK. A phosphoserine mark is found at serine 235, serine 236, serine 240, serine 242, serine 244, and serine 247. The segment covering 236 to 249 has biased composition (low complexity); the sequence is SLRASTSKSESSQK.

It belongs to the eukaryotic ribosomal protein eS6 family. As to quaternary structure, component of the small ribosomal subunit. Part of the small subunit (SSU) processome, composed of more than 70 proteins and the RNA chaperone small nucleolar RNA (snoRNA) U3. Ribosomal protein S6 is the major substrate of protein kinases in eukaryote ribosomes. The phosphorylation is stimulated by growth factors, tumor promoting agents, and mitogens. It is dephosphorylated at growth arrest. Phosphorylated at Ser-235 and Ser-236 by RPS6KA1 and RPS6KA3; phosphorylation at these sites facilitates the assembly of the pre-initiation complex. Post-translationally, specifically hydroxylated (with R stereochemistry) at C-3 of Arg-137 by KDM8. In terms of processing, mono-ADP-ribosylation at Glu-35 by PARP16 inhibits polysome assembly and mRNA loading, thereby inhibiting protein translation.

It is found in the cytoplasm. The protein localises to the nucleus. The protein resides in the nucleolus. Functionally, component of the 40S small ribosomal subunit. Plays an important role in controlling cell growth and proliferation through the selective translation of particular classes of mRNA. Part of the small subunit (SSU) processome, first precursor of the small eukaryotic ribosomal subunit. During the assembly of the SSU processome in the nucleolus, many ribosome biogenesis factors, an RNA chaperone and ribosomal proteins associate with the nascent pre-rRNA and work in concert to generate RNA folding, modifications, rearrangements and cleavage as well as targeted degradation of pre-ribosomal RNA by the RNA exosome. The polypeptide is Small ribosomal subunit protein eS6 (RPS6) (Oryctolagus cuniculus (Rabbit)).